Here is a 317-residue protein sequence, read N- to C-terminus: Melanocyte-stimulating hormone receptor (317 aa).

At 1–37 (MPALGSQRRLLGSLNCTPPATLPFTLAPNRTGPQCLE) the chain is on the extracellular side. Asn29 is a glycosylation site (N-linked (GlcNAc...) asparagine). A helical membrane pass occupies residues 38 to 63 (VSIPDGLFLSLGLVSLVENVLVVAAI). At 64-72 (AKNRNLHSP) the chain is on the cytoplasmic side. The helical transmembrane segment at 73-93 (MYYFICCLAVSDLLVSVSNVL) threads the bilayer. Topologically, residues 94–118 (ETAVMLLLEAGVLATQAAVVQQLDN) are extracellular. The chain crosses the membrane as a helical span at residues 119 to 140 (VIDVLICGSMVSSLCFLGAIAV). Residues 141–163 (DRYISIFYALRYHSVVTLPRAWR) lie on the Cytoplasmic side of the membrane. Residues 164 to 183 (IIAAIWVASILTSLLFITYY) form a helical membrane-spanning segment. At 184-191 (NHKVILLC) the chain is on the extracellular side. Residues 192 to 211 (LVGLFIAMLALMAVLYVHML) traverse the membrane as a helical segment. Residues 212-240 (ARACQHARGIARLQKRQRPIHQGFGLKGA) are Cytoplasmic-facing. A helical membrane pass occupies residues 241–266 (ATLTILLGVFFLCWGPFFLHLSLIVL). The Extracellular portion of the chain corresponds to 267-279 (CPQHPTCGCIFKN). The chain crosses the membrane as a helical span at residues 280-300 (FNLFLALIICNAIVDPLIYAF). At 301-317 (RSQELRKTLQEVLQCSW) the chain is on the cytoplasmic side. The S-palmitoyl cysteine moiety is linked to residue Cys315.

It belongs to the G-protein coupled receptor 1 family. Interacts with MGRN1, but does not undergo MGRN1-mediated ubiquitination; this interaction competes with GNAS-binding and thus inhibits agonist-induced cAMP production. Interacts with OPN3; the interaction results in a decrease in MC1R-mediated cAMP signaling and ultimately a decrease in melanin production in melanocytes. As to expression, highly expressed in the testis.

The protein localises to the cell membrane. Its function is as follows. Receptor for MSH (alpha, beta) and ACTH. Does not seem to be active with gamma-MSH. The activity of this receptor is mediated by G proteins which activate adenylate cyclase. Mediates melanogenesis, the production of eumelanin (black/brown) and phaeomelanin (red/yellow), via regulation of cAMP signaling in melanocytes. This chain is Melanocyte-stimulating hormone receptor (MC1R), found in Bos taurus (Bovine).